Consider the following 166-residue polypeptide: Co-chaperone protein HscB homolog (166 aa).

The 73-residue stretch at 3–75 (QYFTLFRIEP…IDRAAYLLKT (73 aa)) folds into the J domain.

This sequence belongs to the HscB family. As to quaternary structure, interacts with HscA and stimulates its ATPase activity.

Functionally, co-chaperone involved in the maturation of iron-sulfur cluster-containing proteins. Seems to help targeting proteins to be folded toward HscA. The sequence is that of Co-chaperone protein HscB homolog from Neisseria meningitidis serogroup C (strain 053442).